We begin with the raw amino-acid sequence, 217 residues long: Melanocortin-2 receptor accessory protein 2A (217 aa).

N-linked (GlcNAc...) asparagine glycosylation occurs at Asn-8. A helical membrane pass occupies residues 42 to 62; sequence IVIGFWVGLAVFVIFMFFVLT.

Belongs to the MRAP family. Interacts with mc4r.

The protein localises to the cell membrane. It localises to the endoplasmic reticulum membrane. Inhibitor of melanocortin receptor 4 (mc4r), a receptor involved in energy homeostasis. Plays a role during larval development in the control of energy homeostasis and body weight regulation by decreasing ligand-sensitivity of mc4r and mc4r-mediated generation of cAMP, leading to stimulate growth during larval development. Acts by stabilizing an inactive conformation of mc4r during embryonic development, when all the energy consumed is obtained from the yolk sac, possibly to speed the rapid maturation to the mobile free-feeding juvenile stage reached at 5 dpf. This Danio rerio (Zebrafish) protein is Melanocortin-2 receptor accessory protein 2A (mrap2a).